A 348-amino-acid chain; its full sequence is MO25-like protein At2g03410 (348 aa).

The protein belongs to the Mo25 family.

This is MO25-like protein At2g03410 from Arabidopsis thaliana (Mouse-ear cress).